A 221-amino-acid chain; its full sequence is Thiamine-phosphate synthase (221 aa).

4-amino-2-methyl-5-(diphosphooxymethyl)pyrimidine contacts are provided by residues Gln-49–Lys-53 and Asn-85. Mg(2+)-binding residues include Asp-86 and Asp-105. Residue Ser-124 coordinates 4-amino-2-methyl-5-(diphosphooxymethyl)pyrimidine. 2-[(2R,5Z)-2-carboxy-4-methylthiazol-5(2H)-ylidene]ethyl phosphate is bound at residue Thr-151–Ser-153. Lys-154 serves as a coordination point for 4-amino-2-methyl-5-(diphosphooxymethyl)pyrimidine. 2-[(2R,5Z)-2-carboxy-4-methylthiazol-5(2H)-ylidene]ethyl phosphate-binding positions include Gly-183 and Ile-203–Ser-204.

Belongs to the thiamine-phosphate synthase family. Mg(2+) serves as cofactor.

It carries out the reaction 2-[(2R,5Z)-2-carboxy-4-methylthiazol-5(2H)-ylidene]ethyl phosphate + 4-amino-2-methyl-5-(diphosphooxymethyl)pyrimidine + 2 H(+) = thiamine phosphate + CO2 + diphosphate. The catalysed reaction is 2-(2-carboxy-4-methylthiazol-5-yl)ethyl phosphate + 4-amino-2-methyl-5-(diphosphooxymethyl)pyrimidine + 2 H(+) = thiamine phosphate + CO2 + diphosphate. The enzyme catalyses 4-methyl-5-(2-phosphooxyethyl)-thiazole + 4-amino-2-methyl-5-(diphosphooxymethyl)pyrimidine + H(+) = thiamine phosphate + diphosphate. Its pathway is cofactor biosynthesis; thiamine diphosphate biosynthesis; thiamine phosphate from 4-amino-2-methyl-5-diphosphomethylpyrimidine and 4-methyl-5-(2-phosphoethyl)-thiazole: step 1/1. Functionally, condenses 4-methyl-5-(beta-hydroxyethyl)thiazole monophosphate (THZ-P) and 2-methyl-4-amino-5-hydroxymethyl pyrimidine pyrophosphate (HMP-PP) to form thiamine monophosphate (TMP). The sequence is that of Thiamine-phosphate synthase from Histophilus somni (strain 129Pt) (Haemophilus somnus).